A 1040-amino-acid polypeptide reads, in one-letter code: Multidrug resistance protein MdtB (1040 aa).

12 helical membrane passes run 16–36, 347–367, 369–389, 396–416, 440–460, 472–492, 537–557, 863–883, 888–908, 911–931, 968–988, and 998–1018; these read FIMRPVATTLLMVAILLAGII, LMMAIALVVMIIYLFLRNIPA, IIPGVAVPLSLIGTFAVMVFL, LTLMALTIATGFVVDDAIVVI, IGFTIISLTFSLIAVLIPLLF, FAITLAVAILISAVVSLTLTP, WLTLSVALSTLLLSVLLWVFI, LGSTVWLIVAAVVAMYIVLGI, FIHPITILSTLPTAGVGALLA, IAGSELDVIAIIGIILLIGIV, ILMTTLAALLGALPLMLSTGV, and IGMVGGLVVSQVLTLFTTPVI.

Belongs to the resistance-nodulation-cell division (RND) (TC 2.A.6) family. MdtB subfamily. Part of a tripartite efflux system composed of MdtA, MdtB and MdtC. MdtB forms a heteromultimer with MdtC.

It is found in the cell inner membrane. This Shigella boydii serotype 18 (strain CDC 3083-94 / BS512) protein is Multidrug resistance protein MdtB.